Reading from the N-terminus, the 457-residue chain is tRNA-2-methylthio-N(6)-dimethylallyladenosine synthase (457 aa).

In terms of domain architecture, MTTase N-terminal spans 3 to 120 (KKVYVKTFGC…LPQMIDKRRE (118 aa)). [4Fe-4S] cluster contacts are provided by cysteine 12, cysteine 49, cysteine 83, cysteine 157, cysteine 161, and cysteine 164. Residues 143 to 377 (RVDGPSAFVS…QATIEENVQR (235 aa)) form the Radical SAM core domain. Residues 380 to 447 (DSMVGKIERI…PHSLRGELVL (68 aa)) enclose the TRAM domain.

The protein belongs to the methylthiotransferase family. MiaB subfamily. Monomer. The cofactor is [4Fe-4S] cluster.

Its subcellular location is the cytoplasm. The enzyme catalyses N(6)-dimethylallyladenosine(37) in tRNA + (sulfur carrier)-SH + AH2 + 2 S-adenosyl-L-methionine = 2-methylsulfanyl-N(6)-dimethylallyladenosine(37) in tRNA + (sulfur carrier)-H + 5'-deoxyadenosine + L-methionine + A + S-adenosyl-L-homocysteine + 2 H(+). Its function is as follows. Catalyzes the methylthiolation of N6-(dimethylallyl)adenosine (i(6)A), leading to the formation of 2-methylthio-N6-(dimethylallyl)adenosine (ms(2)i(6)A) at position 37 in tRNAs that read codons beginning with uridine. This is tRNA-2-methylthio-N(6)-dimethylallyladenosine synthase from Paraburkholderia xenovorans (strain LB400).